Here is a 392-residue protein sequence, read N- to C-terminus: Phosphoglycerate kinase (392 aa).

Residues 21-23 (DLN), Arg-36, 59-62 (HLGR), Arg-114, and Arg-147 contribute to the substrate site. ATP contacts are provided by residues Lys-198, Glu-320, and 346 to 349 (GGDT).

The protein belongs to the phosphoglycerate kinase family. As to quaternary structure, monomer.

It is found in the cytoplasm. The enzyme catalyses (2R)-3-phosphoglycerate + ATP = (2R)-3-phospho-glyceroyl phosphate + ADP. It functions in the pathway carbohydrate degradation; glycolysis; pyruvate from D-glyceraldehyde 3-phosphate: step 2/5. This Nitrosomonas eutropha (strain DSM 101675 / C91 / Nm57) protein is Phosphoglycerate kinase.